The chain runs to 40 residues: MADTTGRIPLWIIGTVTGIIVIGLIGIFFYGSYSGLGSSL.

A helical membrane pass occupies residues 8–28; that stretch reads IPLWIIGTVTGIIVIGLIGIF.

It belongs to the PsbJ family. PSII is composed of 1 copy each of membrane proteins PsbA, PsbB, PsbC, PsbD, PsbE, PsbF, PsbH, PsbI, PsbJ, PsbK, PsbL, PsbM, PsbT, PsbX, PsbY, PsbZ, Psb30/Ycf12, at least 3 peripheral proteins of the oxygen-evolving complex and a large number of cofactors. It forms dimeric complexes.

It localises to the plastid. The protein localises to the chloroplast thylakoid membrane. In terms of biological role, one of the components of the core complex of photosystem II (PSII). PSII is a light-driven water:plastoquinone oxidoreductase that uses light energy to abstract electrons from H(2)O, generating O(2) and a proton gradient subsequently used for ATP formation. It consists of a core antenna complex that captures photons, and an electron transfer chain that converts photonic excitation into a charge separation. The sequence is that of Photosystem II reaction center protein J from Morus indica (Mulberry).